The following is a 349-amino-acid chain: Phenylalanine--tRNA ligase alpha subunit (349 aa).

Residue Glu258 participates in Mg(2+) binding.

The protein belongs to the class-II aminoacyl-tRNA synthetase family. Phe-tRNA synthetase alpha subunit type 1 subfamily. In terms of assembly, tetramer of two alpha and two beta subunits. Mg(2+) serves as cofactor.

Its subcellular location is the cytoplasm. It carries out the reaction tRNA(Phe) + L-phenylalanine + ATP = L-phenylalanyl-tRNA(Phe) + AMP + diphosphate + H(+). The polypeptide is Phenylalanine--tRNA ligase alpha subunit (Rickettsia felis (strain ATCC VR-1525 / URRWXCal2) (Rickettsia azadi)).